The chain runs to 844 residues: RPA-related protein RADX (844 aa).

Positions 228–331 (WHNRKNFPAL…LISTMEICLN (104 aa)) form a DNA-binding region, OB. Disordered regions lie at residues 571-609 (PASE…RPMD) and 626-664 (GPTA…TGKS). Over residues 572–587 (ASETLQNASPPSTSQA) the composition is skewed to polar residues. Over residues 590 to 608 (KEGHYHERGSKRSQDDRPM) the composition is skewed to basic and acidic residues. Over residues 652 to 662 (SRENSTANATG) the composition is skewed to polar residues.

It is found in the chromosome. Functionally, single-stranded DNA-binding protein recruited to replication forks to maintain genome stability. Prevents fork collapse by antagonizing the accumulation of RAD51 at forks to ensure the proper balance of fork remodeling and protection without interfering with the capacity of cells to complete homologous recombination of double-strand breaks. In Rattus norvegicus (Rat), this protein is RPA-related protein RADX.